Reading from the N-terminus, the 581-residue chain is Kelch-like protein 38 (581 aa).

Positions 34–101 (TDVSICSGAW…VYTGEVHISA (68 aa)) constitute a BTB domain. Residues 136–237 (CLGLVRLAEI…HPAFFHHFIA (102 aa)) form the BACK domain. Kelch repeat units lie at residues 285–332 (FLLL…TLHR), 334–383 (VYVL…THRN), 384–431 (FIFS…VKDQ), 433–479 (LYLF…VLGE), 480–521 (QIVI…VMGN), and 523–573 (LYVT…TLQC).

In Mus musculus (Mouse), this protein is Kelch-like protein 38 (Klhl38).